A 44-amino-acid chain; its full sequence is Non-structural protein 7b (44 aa).

The helical transmembrane segment at 9–29 threads the bilayer; it reads FYLCFLAFLLFLVLIMLLIFW.

Its subcellular location is the host membrane. This chain is Non-structural protein 7b, found in Bat coronavirus HKU3 (BtCoV).